Here is a 138-residue protein sequence, read N- to C-terminus: Putative pre-16S rRNA nuclease (138 aa).

It belongs to the YqgF nuclease family.

Its subcellular location is the cytoplasm. Could be a nuclease involved in processing of the 5'-end of pre-16S rRNA. The polypeptide is Putative pre-16S rRNA nuclease (Klebsiella pneumoniae subsp. pneumoniae (strain ATCC 700721 / MGH 78578)).